The sequence spans 1458 residues: Secretory phospholipase A2 receptor (1458 aa).

The first 23 residues, 1–23 (MLLSLLLLLLLGAPRRCTEGAAA), serve as a signal peptide directing secretion. Residues 24-1393 (ALSPERVLKW…EHPGKGPSHS (1370 aa)) are Extracellular-facing. Intrachain disulfides connect cysteine 49-cysteine 62, cysteine 87-cysteine 104, cysteine 176-cysteine 202, cysteine 190-cysteine 217, cysteine 258-cysteine 352, cysteine 328-cysteine 344, cysteine 404-cysteine 499, cysteine 476-cysteine 491, cysteine 615-cysteine 632, cysteine 697-cysteine 794, cysteine 772-cysteine 786, cysteine 838-cysteine 935, cysteine 912-cysteine 927, cysteine 1065-cysteine 1085, cysteine 1207-cysteine 1221, cysteine 1278-cysteine 1373, and cysteine 1350-cysteine 1365. Residues 49-113 (CIQAGKSVLT…CDSTHVSLRW (65 aa)) enclose the Ricin B-type lectin domain. Asparagine 91 carries N-linked (GlcNAc...) asparagine glycosylation. Positions 171 to 219 (AHGTPCMFPFQYNHQWHHECTREGRQDDSLWCATTSRYERDEKWGFCPD) constitute a Fibronectin type-II domain. C-type lectin domains lie at 227–356 (CDAV…KKYL), 374–502 (TDCE…CKKP), 511–645 (SGCQ…KQPV), 660–798 (HPCY…KIPR), 815–939 (LFHQ…KRKT), 954–1098 (GTCP…EKIQ), 1117–1231 (LEYG…AICH), and 1243–1376 (ELCS…CKMK). N-linked (GlcNAc...) asparagine glycosylation is found at asparagine 408, asparagine 431, and asparagine 452. A helical transmembrane segment spans residues 1394 to 1416 (IVPLAVALTLVVILAIITLSFYI). Topologically, residues 1417-1458 (YKQNKGFFRRLAGVGNSYYPTTNFSTIHLEENILISDLEKND) are cytoplasmic. Residues 1432–1438 (NSYYPTT) carry the Endocytosis signal motif.

As to quaternary structure, interacts with sPLA2-IB/PLA2G1B; this interaction mediates intracellular signaling as well as clearance of extracellular sPLA2-IB/PLA2G1B via endocytotic pathway. Interacts with sPLA2-X/PLA2G10; this interaction mediates sPLA2-X/PLA2G10 clearance and inactivation. In terms of processing, the secretory phospholipase A2 receptor form may be produced by the action of metalloproteinases. It contains all extracellular domains and only lacks transmembrane and cytosolic regions. It is however unclear whether this form is produced by proteolytic cleavage as suggested by some experiments, or by alternative splicing. As to expression, lung, skeletal muscle, brain, kidney and heart.

The protein localises to the cell membrane. Its subcellular location is the secreted. In terms of biological role, receptor for secretory phospholipase A2 (sPLA2). Also able to bind to snake PA2-like toxins. Although its precise function remains unclear, binding of sPLA2 to its receptor participates in both positive and negative regulation of sPLA2 functions as well as clearance of sPLA2. Binding of sPLA2-IB/PLA2G1B induces various effects depending on the cell type, such as activation of the mitogen-activated protein kinase (MAPK) cascade to induce cell proliferation, the production of lipid mediators, selective release of arachidonic acid in bone marrow-derived mast cells. In neutrophils, binding of sPLA2-IB/PLA2G1B can activate p38 MAPK to stimulate elastase release and cell adhesion. May be involved in responses in pro-inflammatory cytokine productions during endotoxic shock. Also has endocytic properties and rapidly internalizes sPLA2 ligands, which is particularly important for the clearance of extracellular sPLA2s to protect their potent enzymatic activities. The soluble secretory phospholipase A2 receptor form is circulating and acts as a negative regulator of sPLA2 functions by blocking the biological functions of sPLA2-IB/PLA2G1B and sPLA2-X/PLA2G10. The chain is Secretory phospholipase A2 receptor (PLA2R1) from Oryctolagus cuniculus (Rabbit).